The chain runs to 205 residues: Ras-related protein RABB1a (205 aa).

13–20 (GDTGVGKS) contacts GTP. An Effector region motif is present at residues 35–43 (HDLTIGVEF). Residues 61–65 (DTAGQ), 119–122 (NKCD), and 149–150 (SA) each bind GTP. Residues 179–205 (ANEPGITPGPFGGKDASSSQQRRGCCG) form a disordered region. Over residues 194-205 (ASSSQQRRGCCG) the composition is skewed to polar residues. S-geranylgeranyl cysteine attachment occurs at residues cysteine 203 and cysteine 204.

This sequence belongs to the small GTPase superfamily. Rab family.

The protein localises to the cell membrane. Functionally, intracellular vesicle trafficking and protein transport. The sequence is that of Ras-related protein RABB1a (RABB1A) from Arabidopsis thaliana (Mouse-ear cress).